The chain runs to 437 residues: Trigger factor (437 aa).

In terms of domain architecture, PPIase FKBP-type spans 163 to 248; that stretch reads GHMVTIDYAF…LNEIKRKELP (86 aa).

This sequence belongs to the FKBP-type PPIase family. Tig subfamily.

It is found in the cytoplasm. It catalyses the reaction [protein]-peptidylproline (omega=180) = [protein]-peptidylproline (omega=0). Its function is as follows. Involved in protein export. Acts as a chaperone by maintaining the newly synthesized protein in an open conformation. Functions as a peptidyl-prolyl cis-trans isomerase. The sequence is that of Trigger factor from Pelobacter propionicus (strain DSM 2379 / NBRC 103807 / OttBd1).